Here is a 271-residue protein sequence, read N- to C-terminus: Thiosulfate sulfurtransferase (271 aa).

2 consecutive Rhodanese domains span residues 21–129 and 159–270; these read SAPE…PLSR and GAAD…TPVE. Cys-230 serves as the catalytic Cysteine persulfide intermediate. Arg-235 is a substrate binding site.

The protein localises to the cytoplasm. The catalysed reaction is thiosulfate + hydrogen cyanide = thiocyanate + sulfite + 2 H(+). This chain is Thiosulfate sulfurtransferase (rhdA), found in Azotobacter vinelandii.